A 437-amino-acid chain; its full sequence is Enolase (437 aa).

Residues His-160 and Glu-169 each coordinate substrate. Glu-212 (proton donor) is an active-site residue. Mg(2+) is bound by residues Asp-247, Glu-296, and Asp-321. Positions 296 and 321 each coordinate substrate. Lys-346 (proton acceptor) is an active-site residue. Substrate contacts are provided by residues 373 to 376 (SHRS) and Lys-397.

Belongs to the enolase family. In terms of assembly, homodimer. Mg(2+) serves as cofactor.

Its subcellular location is the cytoplasm. The catalysed reaction is (2R)-2-phosphoglycerate = phosphoenolpyruvate + H2O. It functions in the pathway carbohydrate degradation; glycolysis; pyruvate from D-glyceraldehyde 3-phosphate: step 4/5. This is Enolase (ENO) from Eremothecium gossypii (strain ATCC 10895 / CBS 109.51 / FGSC 9923 / NRRL Y-1056) (Yeast).